The following is a 149-amino-acid chain: METLFSLPFTVLECPNVKLKKPSWLHMPSAMTVYAVVIVSYFLITGGIIYDVIVEPPSVGSMTDEHGHQRPVAFLAYRVNGQYIMEGLASSFLFTMGGLGFIILDRSNAPNIPKLNRFLLLFIGFVSVLLSFFMARVFMRMKLPGYLMG.

The Cytoplasmic segment spans residues 1–32; sequence METLFSLPFTVLECPNVKLKKPSWLHMPSAMT. A helical membrane pass occupies residues 33-53; it reads VYAVVIVSYFLITGGIIYDVI. Topologically, residues 54–83 are extracellular; the sequence is VEPPSVGSMTDEHGHQRPVAFLAYRVNGQY. The helical transmembrane segment at 84–104 threads the bilayer; sequence IMEGLASSFLFTMGGLGFIIL. Topologically, residues 105-117 are cytoplasmic; sequence DRSNAPNIPKLNR. The helical transmembrane segment at 118–138 threads the bilayer; that stretch reads FLLLFIGFVSVLLSFFMARVF. Over 139–149 the chain is Extracellular; that stretch reads MRMKLPGYLMG.

The protein belongs to the OSTC family. In terms of assembly, specific component of the STT3A-containing form of the oligosaccharyltransferase (OST) complex.

The protein resides in the membrane. Its pathway is protein modification; protein glycosylation. In terms of biological role, specific component of the STT3A-containing form of the oligosaccharyl transferase (OST) complex that catalyzes the initial transfer of a defined glycan (Glc(3)Man(9)GlcNAc(2) in eukaryotes) from the lipid carrier dolichol-pyrophosphate to an asparagine residue within an Asn-X-Ser/Thr consensus motif in nascent polypeptide chains, the first step in protein N-glycosylation. N-glycosylation occurs cotranslationally and the complex associates with the Sec61 complex at the channel-forming translocon complex that mediates protein translocation across the endoplasmic reticulum (ER). All subunits are required for a maximal enzyme activity. This Danio rerio (Zebrafish) protein is Oligosaccharyltransferase complex subunit ostc.